A 357-amino-acid polypeptide reads, in one-letter code: Trans-enoyl reductase buaC (357 aa).

Position 50-53 (Val-50–Lys-53) interacts with NADP(+). Thr-135 to Met-142 serves as a coordination point for substrate. NADP(+) is bound by residues Ser-170 to Thr-173, Ser-193 to Asn-196, Tyr-211, and Leu-258 to Asn-259. Ala-278–Thr-282 provides a ligand contact to substrate. Ile-347–Ser-348 is a binding site for NADP(+).

This sequence belongs to the zinc-containing alcohol dehydrogenase family. Monomer.

The protein operates within mycotoxin biosynthesis. Functionally, trans-enoyl reductase; part of the gene cluster that mediates the biosynthesis of burnettramic acids, an unusual class of bolaamphiphilic pyrrolizidinediones that display potent antibacterial, antifungal, and cytotoxic activities. The first step of the biosynthesis of burnettramic acids is the hydroxylation of proline by the proline hydroxylase buaE to generate 4-hydroxyproline. The PKS-NRPS buaA and trans-enoyl reductase buaC construct the highly reduced polyketide chain, and the condensation (C) domain of buaA then catalyzes the amide bond formation with the activated 4-hydroxyproline. This is followed by the R domain releasing the nascent polyketide-peptide directly via a Dieckmann condensation to afford a tetramic acid fused to the hydroxyproline, generating the bicyclic pyrrolidinedione moiety. The cytochrome P450 monooxygenases buaD and buaG are likely responsible for the multiple hydroxylations on the polyketide chain and its terminus, although in the heterologous context, buaD does not appear to be required. Therefore, while buaG may be a multifunctional cytochrome P450 monooxygenase, it cannot be ruled out that the two secondary alcohols on the polyketide chain could have an acetate origin. Finally, the glycosyltransferase buaB transfers beta-D-mannose to the aglycone burnettramic acid A to form burnettramic acid A. Burnettramic acid B is a minor cis-pyrrolizidine epimer of burnettramic acid A and it is likely that small amounts of it form naturally in acidic environments. This chain is Trans-enoyl reductase buaC, found in Petromyces alliaceus (Aspergillus alliaceus).